The chain runs to 627 residues: Siderophore iron transporter ARN1 (627 aa).

Topologically, residues 1–70 (MESVHSRDPV…TEIIGSAYNK (70 aa)) are extracellular. A helical transmembrane segment spans residues 71–91 (WYLQAILLLSAFICGYGYGLD). Residues 92–110 (GNIRYIYTGYATSSYSEHS) are Cytoplasmic-facing. Residues 111–131 (LLSTINVINAVVSAASQIIYA) form a helical membrane-spanning segment. Residues 132-135 (RLSD) are Extracellular-facing. Residues 136–156 (VFGRLYLFISAVILYVVGTII) traverse the membrane as a helical segment. The Cytoplasmic segment spans residues 157 to 167 (QSQAYDVQRYA). A helical transmembrane segment spans residues 168-188 (AGAIFYNAGYVGVILILLIIL). At 189-197 (SDFSSLKWR) the chain is on the extracellular side. The chain crosses the membrane as a helical span at residues 198–218 (LLYQFVPTWPFIINTWIAGNI). The Cytoplasmic portion of the chain corresponds to 219–231 (TSRANPVVNWSWD). Residues 232 to 252 (VGMWAFIFPLSCVPIVLCMLH) traverse the membrane as a helical segment. Residues 253–290 (MQWRARKTPEWHALKGQKSYYQEHGFIKILKQLFWMLD) are Extracellular-facing. A helical transmembrane segment spans residues 291–311 (VVGVLLMGCSLGCILVPLTLA). At 312–323 (GGVKTTWNDSRL) the chain is on the cytoplasmic side. The helical transmembrane segment at 324–344 (IGPFVLGFVLIPILWIWEYRF) threads the bilayer. Topologically, residues 345–367 (ARDPILPYRLVKDRAVWSSMGIS) are extracellular. A helical membrane pass occupies residues 368–388 (FLIDFIYYMAADYLYTVMIVA). Residues 389–398 (VNESVKSATR) are Cytoplasmic-facing. A helical transmembrane segment spans residues 399-419 (IATLSSFVSTVASPFFALLVT). At 420-424 (RCTRL) the chain is on the extracellular side. A helical transmembrane segment spans residues 425-445 (KPFIMFGCALWMVAMGLLYHF). The Cytoplasmic portion of the chain corresponds to 446 to 454 (RGGSQSHSG). A helical transmembrane segment spans residues 455–475 (IIGALCVWGVGTTLFTYPVTV). The Extracellular portion of the chain corresponds to 476-563 (SVQSAVSHEN…LMNAYKYVQR (88 aa)). The chain crosses the membrane as a helical span at residues 564 to 584 (LETIVALVFCVPLIAFSLCLR). At 585–627 (DPKLTDTVAVEYIEDGEYVDTKDNDPILDWFEKLPSKFTFKRE) the chain is on the cytoplasmic side.

It belongs to the major facilitator superfamily.

The protein resides in the cell membrane. The protein localises to the endosome membrane. Its function is as follows. Involved in the transport of siderophore ferrichrome and so has a role in iron homeostasis. This Saccharomyces cerevisiae (strain ATCC 204508 / S288c) (Baker's yeast) protein is Siderophore iron transporter ARN1 (ARN1).